Here is a 490-residue protein sequence, read N- to C-terminus: Cytochrome P450 2C55 (490 aa).

Residue Cys435 participates in heme binding.

The protein belongs to the cytochrome P450 family. Heme serves as cofactor. In terms of tissue distribution, highest level in colon. Low levels in liver and small intestine.

Its subcellular location is the endoplasmic reticulum membrane. It is found in the microsome membrane. It carries out the reaction an organic molecule + reduced [NADPH--hemoprotein reductase] + O2 = an alcohol + oxidized [NADPH--hemoprotein reductase] + H2O + H(+). Its function is as follows. Metabolizes arachidonic acid mainly to 19-hydroxyeicosatetraenoic acid (HETE). The sequence is that of Cytochrome P450 2C55 from Mus musculus (Mouse).